Reading from the N-terminus, the 276-residue chain is Omega-amidase NIT2-A (276 aa).

Residues F4–L248 enclose the CN hydrolase domain. E43 (proton acceptor) is an active-site residue. The active-site Proton donor is K112. C153 acts as the Nucleophile in catalysis.

The protein belongs to the carbon-nitrogen hydrolase superfamily. NIT1/NIT2 family. As to quaternary structure, homodimer.

The protein localises to the cytoplasm. It carries out the reaction 2-oxoglutaramate + H2O = 2-oxoglutarate + NH4(+). It catalyses the reaction 2-oxosuccinamate + H2O = oxaloacetate + NH4(+). Has omega-amidase activity. The role of omega-amidase is to remove potentially toxic intermediates by converting 2-oxoglutaramate and 2-oxosuccinamate to biologically useful 2-oxoglutarate and oxaloacetate, respectively. This chain is Omega-amidase NIT2-A (nit2a), found in Xenopus laevis (African clawed frog).